A 489-amino-acid polypeptide reads, in one-letter code: Tripartite motif-containing protein 10 (489 aa).

The RING-type zinc-finger motif lies at 16–61 (CPICQGTLREPVTIDCGHNFCRGCLTRYCEIPGPESEESLSCPLCK). Residues 94-135 (EVEDACPEHGEKIYFFCEEDEAQLCVVCRETGQHGAHTVRFL) form a B box-type zinc finger. Zn(2+) contacts are provided by Cys-99, His-102, Cys-121, and His-127. Positions 144 to 180 (EQIQKCLVCLRKEREEIQETQSRENKRIQVLLTQVAT) form a coiled coil. A B30.2/SPRY domain is found at 292-486 (QEMKTFLEKL…FSLSCQEGAV (195 aa)).

It belongs to the TRIM/RBCC family. As to quaternary structure, interacts with IFNAR1; this interaction prevents association of IFNAR1 with TYK2. Expressed in embryonic liver.

The protein resides in the cytoplasm. Functionally, E3 ligase that plays an essential role in the differentiation and survival of terminal erythroid cells. May directly bind to PTEN and promote its ubiquitination, resulting in its proteasomal degradation and activation of hypertrophic signaling. In addition, plays a role in immune response regulation by repressing the phosphorylation of STAT1 and STAT2 in the interferon/JAK/STAT signaling pathway independent of its E3 ligase activity. Mechanistically, interacts with the intracellular domain of IFNAR1 and thereby inhibits the association between TYK2 and IFNAR1. The chain is Tripartite motif-containing protein 10 (Trim10) from Mus musculus (Mouse).